The chain runs to 97 residues: Co-chaperonin GroES (97 aa).

The protein belongs to the GroES chaperonin family. As to quaternary structure, heptamer of 7 subunits arranged in a ring. Interacts with the chaperonin GroEL.

Its subcellular location is the cytoplasm. Its function is as follows. Together with the chaperonin GroEL, plays an essential role in assisting protein folding. The GroEL-GroES system forms a nano-cage that allows encapsulation of the non-native substrate proteins and provides a physical environment optimized to promote and accelerate protein folding. GroES binds to the apical surface of the GroEL ring, thereby capping the opening of the GroEL channel. The chain is Co-chaperonin GroES from Elusimicrobium minutum (strain Pei191).